Consider the following 229-residue polypeptide: Geodin cluster transcription factor (229 aa).

Residues 12 to 39 constitute a DNA-binding region (zn(2)-C6 fungal-type); the sequence is CHACAASKVRCSKEKPTCSRCSKRGTTC. Disordered regions lie at residues 50–100 and 141–169; these read KQLN…PGTT and TANS…RPPT. Polar residues-rich tracts occupy residues 51–71 and 153–164; these read QLNN…SLAT and ITSSHNTSSNSP.

It is found in the nucleus. In terms of biological role, transcription factor that regulates the expression of the gene cluster that mediates the biosynthesis of geodin, an intermediate in the biosynthesis of other natural products. The polypeptide is Geodin cluster transcription factor (Aspergillus terreus (strain NIH 2624 / FGSC A1156)).